The following is a 209-amino-acid chain: MGRYTDSVCRQCRREGEKLFLKGDRCYSEKCSVSRRAYPPGAHGQGRRQKPSEYGIQLREKQKTRRIYGIQEKQFRNYFRKADRKQGITGDNLLVLLERRLDNVVYRLGFASSRKEARQLVNHGHFFINGHKANIPSMLVRVGDIIEVRQSSRESNKFQEMKEQAAYKTPPEWLSVDAEKMTGTVLAYPRREQIDTLVNEQLIVELYSR.

An S4 RNA-binding domain is found at 99 to 162 (RRLDNVVYRL…RESNKFQEMK (64 aa)).

It belongs to the universal ribosomal protein uS4 family. As to quaternary structure, part of the 30S ribosomal subunit. Contacts protein S5. The interaction surface between S4 and S5 is involved in control of translational fidelity.

One of the primary rRNA binding proteins, it binds directly to 16S rRNA where it nucleates assembly of the body of the 30S subunit. In terms of biological role, with S5 and S12 plays an important role in translational accuracy. This is Small ribosomal subunit protein uS4 from Syntrophomonas wolfei subsp. wolfei (strain DSM 2245B / Goettingen).